The following is a 276-amino-acid chain: Protein FAM151B (276 aa).

This sequence belongs to the menorin family.

Essential for survival of retinal photoreceptor cells. The protein is Protein FAM151B (FAM151B) of Homo sapiens (Human).